The primary structure comprises 1975 residues: Golgi-specific brefeldin A-resistance guanine nucleotide exchange factor 1 homolog (1975 aa).

Disordered stretches follow at residues 216–243 and 299–352; these read NPTEKRQKRKKKRQLSVHIETKAKEPEN and ISAG…EEKM. Basic residues predominate over residues 221–230; it reads RQKRKKKRQL. The SEC7 domain occupies 624 to 812; the sequence is QIIEQKKRKR…ADMYQAIKTE (189 aa). Residues 1264-1277 are compositionally biased toward polar residues; the sequence is QSLRVGGDQQQQRM. Disordered regions lie at residues 1264 to 1318, 1447 to 1473, 1699 to 1751, 1788 to 1854, and 1877 to 1975; these read QSLR…DLES, DEKAVKKHHHHHHGHKKKELCTDVTED, IKDT…ATAQ, VHSG…QYAY, and YANQ…QEKP. A compositionally biased stretch (basic and acidic residues) spans 1291–1309; sequence GAHEERAYTSEGEERRRGG. Residues 1451 to 1464 are compositionally biased toward basic residues; that stretch reads VKKHHHHHHGHKKK. The span at 1734–1751 shows a compositional bias: low complexity; that stretch reads SNSTAATSTSDPSIATAQ. Residues 1797–1808 are compositionally biased toward pro residues; the sequence is GSPPQTEPPASS. 2 stretches are compositionally biased toward low complexity: residues 1820–1854 and 1877–1894; these read YEQYRQQQAAAAQQYQQYNQNYPQQQQQQQQQYAY and YANQYQHYQQQQQQQQQH. Residues 1895–1909 show a composition bias toward polar residues; it reads PVNPTSPSVHGQYSV. Residues 1938-1957 show a composition bias toward low complexity; the sequence is TPPQNNAPALAPSAPTTTSA.

It is found in the golgi apparatus. The protein resides in the cis-Golgi network. Its subcellular location is the endoplasmic reticulum-Golgi intermediate compartment. In terms of biological role, guanine-nucleotide exchange factor (GEF) for members of the Arf family of small GTPases involved in trafficking in the early secretory pathway; its GEF activity initiates the coating of nascent vesicles via the localized generation of activated ARFs through replacement of GDP with GTP. Also, plays a role in receptor-mediated endocytosis in oocytes and endosomal trafficking. Involved in vesicle retrograde transport from the ERGIC and cis-Golgi compartments to the endoplasmic reticulum (ER). Plays a role in maintaining mitochondrial morphology, network organization and function. May be required for the basolateral cell membrane localization of the serine threonine protein kinase sgk-1 in intestinal cells. This Caenorhabditis elegans protein is Golgi-specific brefeldin A-resistance guanine nucleotide exchange factor 1 homolog.